The chain runs to 1020 residues: Vacuolar membrane protease (1020 aa).

Residues 1–11 (MKCHNPFGFRV) are Cytoplasmic-facing. Residues 12 to 32 (GPVTFWTIIIYLALLVPLLWI) form a helical membrane-spanning segment. Topologically, residues 33–410 (HETVPPAPSS…GFAVFGLRGL (378 aa)) are vacuolar. Residues Asn-50, Asn-94, and Asn-130 are each glycosylated (N-linked (GlcNAc...) asparagine). His-191 and Asp-203 together coordinate Zn(2+). Glu-237 acts as the Proton acceptor in catalysis. Residues Glu-238, Glu-263, and His-336 each coordinate Zn(2+). The chain crosses the membrane as a helical span at residues 411 to 431 (FAWSLTLLIVSPLILAILVFI). The Cytoplasmic portion of the chain corresponds to 432–467 (LNRHDKLYFFSRKINVHNEGSEDPVSIGGFRGFTRF). Residues 468 to 488 (PIAVGFSGALTLASAFLLTKI) form a helical membrane-spanning segment. Residues 489 to 491 (NPM) are Vacuolar-facing. A helical membrane pass occupies residues 492-512 (IVYSSEYAVWGMMLSLFYVSL). Topologically, residues 513-529 (WMTLKGSSAVRPSALQR) are cytoplasmic. The helical transmembrane segment at 530–550 (GYIHIWLFIVSWGLLIVVAVT) threads the bilayer. Over 551-561 (EDRLKIASGYP) the chain is Vacuolar. Residues 562 to 582 (VVFLHSALFLSTVISFLELFG) form a helical membrane-spanning segment. Over 583–690 (LTKKHDYARR…RLPGWTWILQ (108 aa)) the chain is Cytoplasmic. The disordered stretch occupies residues 609 to 648 (DDALIAPDTPNDEAEDSDGEDSEHEPTETTPLRAGGDSRV). Residues 618–631 (PNDEAEDSDGEDSE) are compositionally biased toward acidic residues. The helical transmembrane segment at 691–711 (FLLLAPINVILWGQIGLFAVA) threads the bilayer. The Vacuolar portion of the chain corresponds to 712–724 (ATQAGGADGGSVL). A helical transmembrane segment spans residues 725–745 (TTYLIIAVLSIVILVPLAPFI). Residues 746–750 (HRVHY) lie on the Cytoplasmic side of the membrane. A helical transmembrane segment spans residues 751 to 771 (YVPIILFAAFAGTLIYNLIAF). At 772 to 1020 (PFSANNRYKI…VGLVRPVKRF (249 aa)) the chain is on the vacuolar side. Asn-851, Asn-868, and Asn-873 each carry an N-linked (GlcNAc...) asparagine glycan.

This sequence belongs to the peptidase M28 family. Zn(2+) is required as a cofactor.

The protein resides in the vacuole membrane. In terms of biological role, may be involved in vacuolar sorting and osmoregulation. The polypeptide is Vacuolar membrane protease (Verticillium alfalfae (strain VaMs.102 / ATCC MYA-4576 / FGSC 10136) (Verticillium wilt of alfalfa)).